The sequence spans 71 residues: ATP synthase subunit c (71 aa).

2 helical membrane-spanning segments follow: residues Ala-4–Ile-24 and Ile-48–Ile-68.

This sequence belongs to the ATPase C chain family. F-type ATPases have 2 components, F(1) - the catalytic core - and F(0) - the membrane proton channel. F(1) has five subunits: alpha(3), beta(3), gamma(1), delta(1), epsilon(1). F(0) has three main subunits: a(1), b(2) and c(10-14). The alpha and beta chains form an alternating ring which encloses part of the gamma chain. F(1) is attached to F(0) by a central stalk formed by the gamma and epsilon chains, while a peripheral stalk is formed by the delta and b chains.

It is found in the cell membrane. In terms of biological role, f(1)F(0) ATP synthase produces ATP from ADP in the presence of a proton or sodium gradient. F-type ATPases consist of two structural domains, F(1) containing the extramembraneous catalytic core and F(0) containing the membrane proton channel, linked together by a central stalk and a peripheral stalk. During catalysis, ATP synthesis in the catalytic domain of F(1) is coupled via a rotary mechanism of the central stalk subunits to proton translocation. Its function is as follows. Key component of the F(0) channel; it plays a direct role in translocation across the membrane. A homomeric c-ring of between 10-14 subunits forms the central stalk rotor element with the F(1) delta and epsilon subunits. This chain is ATP synthase subunit c, found in Clostridium botulinum (strain Alaska E43 / Type E3).